The sequence spans 300 residues: Ribonuclease HIII (300 aa).

Positions 86–300 (RSRIGVDESG…FNEVLGSGNQ (215 aa)) constitute an RNase H type-2 domain. Aspartate 92, glutamate 93, and aspartate 196 together coordinate a divalent metal cation.

It belongs to the RNase HII family. RnhC subfamily. Requires Mn(2+) as cofactor. Mg(2+) is required as a cofactor.

The protein resides in the cytoplasm. The catalysed reaction is Endonucleolytic cleavage to 5'-phosphomonoester.. In terms of biological role, endonuclease that specifically degrades the RNA of RNA-DNA hybrids. This Chlamydia trachomatis serovar A (strain ATCC VR-571B / DSM 19440 / HAR-13) protein is Ribonuclease HIII.